Reading from the N-terminus, the 1459-residue chain is Peroxisomal ATPase PEX6 (1459 aa).

Over residues 1–13 (MDFEQYGQSSQQP) the composition is skewed to low complexity. Disordered regions lie at residues 1–28 (MDFE…LNNK) and 316–410 (AAED…RPGR). Over residues 14-26 (RQRRRRAGKRRLN) the composition is skewed to basic residues. The span at 327 to 348 (EMEVTSAAEESETEGSAGSMSD) shows a compositional bias: low complexity. Residues 396–405 (SVASNFTSAT) show a composition bias toward polar residues. Residue 1070–1077 (GPPGTGKT) participates in ATP binding. Residues 1357-1459 (IPEEAPTING…HLRNPMEEVE (103 aa)) are disordered. Residues 1391 to 1401 (STSGQSTTSSK) are compositionally biased toward low complexity. The span at 1402–1413 (GKGKSVSKKGKS) shows a compositional bias: basic residues. Acidic residues predominate over residues 1421-1443 (GSVDGDDEDMADANSKEDEDEDD). Over residues 1444–1459 (YVVRTDHLRNPMEEVE) the composition is skewed to basic and acidic residues.

This sequence belongs to the AAA ATPase family. In terms of assembly, interacts with PEX1; forming the PEX1-PEX6 AAA ATPase complex, which is composed of a heterohexamer formed by a trimer of PEX1-PEX6 dimers.

It is found in the cytoplasm. It localises to the cytosol. The protein localises to the peroxisome membrane. It catalyses the reaction ATP + H2O = ADP + phosphate + H(+). Functionally, component of the PEX1-PEX6 AAA ATPase complex, a protein dislocase complex that mediates the ATP-dependent extraction of the PEX5 receptor from peroxisomal membranes, an essential step for PEX5 recycling. Specifically recognizes PEX5 monoubiquitinated at 'Cys-6', and pulls it out of the peroxisome lumen through the PEX2-PEX10-PEX12 retrotranslocation channel. Extraction by the PEX1-PEX6 AAA ATPase complex is accompanied by unfolding of the TPR repeats and release of bound cargo from PEX5. In Penicillium chrysogenum (Penicillium notatum), this protein is Peroxisomal ATPase PEX6 (pex6).